The following is a 610-amino-acid chain: Fimbrin (610 aa).

EF-hand domains lie at 7–42 and 43–78; these read SEIS…CGEK and VTGV…ARQH. 10 residues coordinate Ca(2+): Asp-20, Asn-22, Asp-24, Gln-26, Glu-31, Asp-56, Asp-58, Asn-60, Ser-62, and Glu-67. Actin-binding regions lie at residues 102-365 and 366-608; these read YSGS…NTHP and ALEP…QVEM. 4 consecutive Calponin-homology (CH) domains span residues 116–232, 260–365, 379–488, and 501–608; these read DEEK…KIGL, LPVE…NTHP, TREE…RGHV, and PIAD…QVEM.

Functionally, binds to actin. In Dictyostelium discoideum (Social amoeba), this protein is Fimbrin (fimA).